The chain runs to 232 residues: Uridylate kinase (232 aa).

13 to 14 is a binding site for ATP; that stretch reads GS. Residue G52 participates in UMP binding. ATP is bound by residues G53 and R57. Residues D74 and 122–128 contribute to the UMP site; that span reads LQPGQST. T147, Y153, and D156 together coordinate ATP.

Belongs to the UMP kinase family. Homohexamer.

It localises to the cytoplasm. It carries out the reaction UMP + ATP = UDP + ADP. The protein operates within pyrimidine metabolism; CTP biosynthesis via de novo pathway; UDP from UMP (UMPK route): step 1/1. Inhibited by UTP. In terms of biological role, catalyzes the reversible phosphorylation of UMP to UDP. The sequence is that of Uridylate kinase from Thermofilum pendens (strain DSM 2475 / Hrk 5).